Consider the following 420-residue polypeptide: Serine hydroxymethyltransferase (420 aa).

Residues Leu-121 and 125–127 contribute to the (6S)-5,6,7,8-tetrahydrofolate site; that span reads GHL. Lys-230 is modified (N6-(pyridoxal phosphate)lysine). Residues Glu-246 and 354-356 each bind (6S)-5,6,7,8-tetrahydrofolate; that span reads SPF.

It belongs to the SHMT family. Homodimer. It depends on pyridoxal 5'-phosphate as a cofactor.

Its subcellular location is the cytoplasm. The enzyme catalyses (6R)-5,10-methylene-5,6,7,8-tetrahydrofolate + glycine + H2O = (6S)-5,6,7,8-tetrahydrofolate + L-serine. The protein operates within one-carbon metabolism; tetrahydrofolate interconversion. It participates in amino-acid biosynthesis; glycine biosynthesis; glycine from L-serine: step 1/1. Its function is as follows. Catalyzes the reversible interconversion of serine and glycine with tetrahydrofolate (THF) serving as the one-carbon carrier. This reaction serves as the major source of one-carbon groups required for the biosynthesis of purines, thymidylate, methionine, and other important biomolecules. Also exhibits THF-independent aldolase activity toward beta-hydroxyamino acids, producing glycine and aldehydes, via a retro-aldol mechanism. This Rickettsia rickettsii (strain Iowa) protein is Serine hydroxymethyltransferase.